We begin with the raw amino-acid sequence, 86 residues long: Small nuclear ribonucleoprotein F (86 aa).

An N-acetylserine modification is found at Ser2. One can recognise a Sm domain in the interval 6–78; the sequence is NPKPFLNGLT…VLYIRGVEEE (73 aa).

This sequence belongs to the snRNP Sm proteins family. SmF/LSm6 subfamily. Core component of the spliceosomal U1, U2, U4 and U5 small nuclear ribonucleoproteins (snRNPs), the building blocks of the spliceosome. Most spliceosomal snRNPs contain a common set of Sm proteins, SNRPB, SNRPD1, SNRPD2, SNRPD3, SNRPE, SNRPF and SNRPG that assemble in a heptameric protein ring on the Sm site of the small nuclear RNA to form the core snRNP. Component of the U1 snRNP. The U1 snRNP is composed of the U1 snRNA and the 7 core Sm proteins SNRPB, SNRPD1, SNRPD2, SNRPD3, SNRPE, SNRPF and SNRPG, and at least three U1 snRNP-specific proteins SNRNP70/U1-70K, SNRPA/U1-A and SNRPC/U1-C. Component of the U4/U6-U5 tri-snRNP complex composed of the U4, U6 and U5 snRNAs and at least PRPF3, PRPF4, PRPF6, PRPF8, PRPF31, SNRNP200, TXNL4A, SNRNP40, SNRPB, SNRPD1, SNRPD2, SNRPD3, SNRPE, SNRPF, SNRPG, DDX23, CD2BP2, PPIH, SNU13, EFTUD2, SART1 and USP39, plus LSM2, LSM3, LSM4, LSM5, LSM6, LSM7 and LSM8. Component of the U7 snRNP complex, or U7 Sm protein core complex, that is composed of the U7 snRNA and at least LSM10, LSM11, SNRPB, SNRPD3, SNRPE, SNRPF and SNRPG; the complex does not contain SNRPD1 and SNRPD2. Component of the minor spliceosome, which splices U12-type introns. Part of the SMN-Sm complex that contains SMN1, GEMIN2/SIP1, DDX20/GEMIN3, GEMIN4, GEMIN5, GEMIN6, GEMIN7, GEMIN8, STRAP/UNRIP and the Sm proteins SNRPB, SNRPD1, SNRPD2, SNRPD3, SNRPE, SNRPF and SNRPG; catalyzes core snRNPs assembly. Forms a 6S pICln-Sm complex composed of CLNS1A/pICln, SNRPD1, SNRPD2, SNRPE, SNRPF and SNRPG; ring-like structure where CLNS1A/pICln mimics additional Sm proteins and which is unable to assemble into the core snRNP. Interacts with GEMIN2 (via N-terminus); the interaction is direct. Interacts with SNRPD2; the interaction is direct. Interacts with SNRPE; the interaction is direct.

The protein resides in the cytoplasm. It is found in the cytosol. Its subcellular location is the nucleus. In terms of biological role, plays a role in pre-mRNA splicing as a core component of the spliceosomal U1, U2, U4 and U5 small nuclear ribonucleoproteins (snRNPs), the building blocks of the spliceosome. Component of both the pre-catalytic spliceosome B complex and activated spliceosome C complexes. As a component of the minor spliceosome, involved in the splicing of U12-type introns in pre-mRNAs. As part of the U7 snRNP it is involved in histone 3'-end processing. The chain is Small nuclear ribonucleoprotein F (SNRPF) from Homo sapiens (Human).